The sequence spans 641 residues: Acetyl-coenzyme A synthetase (641 aa).

Residues 186–189 (RGGK) and Thr-304 each bind CoA. Residues 380 to 382 (GEP), 404 to 409 (DTWWQT), Asp-493, and Arg-508 contribute to the ATP site. Position 516 (Ser-516) interacts with CoA. Arg-519 is a binding site for ATP. Positions 530, 532, and 535 each coordinate Mg(2+). Lys-602 is subject to N6-acetyllysine.

It belongs to the ATP-dependent AMP-binding enzyme family. Mg(2+) serves as cofactor. In terms of processing, acetylated. Deacetylation by the SIR2-homolog deacetylase activates the enzyme.

It catalyses the reaction acetate + ATP + CoA = acetyl-CoA + AMP + diphosphate. In terms of biological role, catalyzes the conversion of acetate into acetyl-CoA (AcCoA), an essential intermediate at the junction of anabolic and catabolic pathways. AcsA undergoes a two-step reaction. In the first half reaction, AcsA combines acetate with ATP to form acetyl-adenylate (AcAMP) intermediate. In the second half reaction, it can then transfer the acetyl group from AcAMP to the sulfhydryl group of CoA, forming the product AcCoA. In Gamma-proteobacterium EBAC31A08, this protein is Acetyl-coenzyme A synthetase.